The following is a 389-amino-acid chain: Glutamate 5-kinase (389 aa).

Lys-16 contacts ATP. Residues Ser-56, Asp-143, and Asn-155 each contribute to the substrate site. 175–176 (SD) provides a ligand contact to ATP. A PUA domain is found at 281 to 358 (AGELHVDDGA…AEIEAILGYA (78 aa)).

This sequence belongs to the glutamate 5-kinase family.

The protein localises to the cytoplasm. The enzyme catalyses L-glutamate + ATP = L-glutamyl 5-phosphate + ADP. The protein operates within amino-acid biosynthesis; L-proline biosynthesis; L-glutamate 5-semialdehyde from L-glutamate: step 1/2. Catalyzes the transfer of a phosphate group to glutamate to form L-glutamate 5-phosphate. This chain is Glutamate 5-kinase, found in Rhizobium etli (strain CIAT 652).